The primary structure comprises 1377 residues: DNA-directed RNA polymerase subunit beta (1377 aa).

Belongs to the RNA polymerase beta chain family. In terms of assembly, the RNAP catalytic core consists of 2 alpha, 1 beta, 1 beta' and 1 omega subunit. When a sigma factor is associated with the core the holoenzyme is formed, which can initiate transcription.

The catalysed reaction is RNA(n) + a ribonucleoside 5'-triphosphate = RNA(n+1) + diphosphate. Its function is as follows. DNA-dependent RNA polymerase catalyzes the transcription of DNA into RNA using the four ribonucleoside triphosphates as substrates. In Brucella canis (strain ATCC 23365 / NCTC 10854 / RM-666), this protein is DNA-directed RNA polymerase subunit beta.